A 147-amino-acid chain; its full sequence is UPF0178 protein Tgr7_2584 (147 aa).

It belongs to the UPF0178 family.

The polypeptide is UPF0178 protein Tgr7_2584 (Thioalkalivibrio sulfidiphilus (strain HL-EbGR7)).